The sequence spans 338 residues: Phenylalanine--tRNA ligase alpha subunit (338 aa).

E253 contacts Mg(2+).

The protein belongs to the class-II aminoacyl-tRNA synthetase family. Phe-tRNA synthetase alpha subunit type 1 subfamily. As to quaternary structure, tetramer of two alpha and two beta subunits. The cofactor is Mg(2+).

It localises to the cytoplasm. The catalysed reaction is tRNA(Phe) + L-phenylalanine + ATP = L-phenylalanyl-tRNA(Phe) + AMP + diphosphate + H(+). In Geotalea daltonii (strain DSM 22248 / JCM 15807 / FRC-32) (Geobacter daltonii), this protein is Phenylalanine--tRNA ligase alpha subunit.